Here is a 378-residue protein sequence, read N- to C-terminus: UDP-N-acetylglucosamine 2-epimerase (378 aa).

Histidine 214 is an active-site residue.

Belongs to the UDP-N-acetylglucosamine 2-epimerase family.

It carries out the reaction UDP-N-acetyl-alpha-D-glucosamine = UDP-N-acetyl-alpha-D-mannosamine. Its pathway is bacterial outer membrane biogenesis; LPS O-antigen biosynthesis. The polypeptide is UDP-N-acetylglucosamine 2-epimerase (rfbC) (Salmonella borreze).